Reading from the N-terminus, the 150-residue chain is Arginine repressor (150 aa).

Belongs to the ArgR family.

The protein resides in the cytoplasm. It participates in amino-acid biosynthesis; L-arginine biosynthesis [regulation]. Its function is as follows. Regulates arginine biosynthesis genes. The protein is Arginine repressor of Psychromonas ingrahamii (strain DSM 17664 / CCUG 51855 / 37).